The primary structure comprises 341 residues: tRNA N6-adenosine threonylcarbamoyltransferase (341 aa).

H113 and H117 together coordinate Fe cation. Substrate is bound by residues 141–145, D174, G187, and N282; that span reads LVSGG. D310 provides a ligand contact to Fe cation.

The protein belongs to the KAE1 / TsaD family. Fe(2+) is required as a cofactor.

It is found in the cytoplasm. It catalyses the reaction L-threonylcarbamoyladenylate + adenosine(37) in tRNA = N(6)-L-threonylcarbamoyladenosine(37) in tRNA + AMP + H(+). Functionally, required for the formation of a threonylcarbamoyl group on adenosine at position 37 (t(6)A37) in tRNAs that read codons beginning with adenine. Is involved in the transfer of the threonylcarbamoyl moiety of threonylcarbamoyl-AMP (TC-AMP) to the N6 group of A37, together with TsaE and TsaB. TsaD likely plays a direct catalytic role in this reaction. The chain is tRNA N6-adenosine threonylcarbamoyltransferase from Porphyromonas gingivalis (strain ATCC BAA-308 / W83).